The chain runs to 242 residues: UPF0246 protein SPP_1571 (242 aa).

Belongs to the UPF0246 family.

The polypeptide is UPF0246 protein SPP_1571 (Streptococcus pneumoniae (strain P1031)).